The chain runs to 388 residues: Cystathionine gamma-synthase (388 aa).

A disordered region spans residues 1 to 24 (MSEDRTGHQGISGPATRAIHAGYR). Residue K208 is modified to N6-(pyridoxal phosphate)lysine.

The protein belongs to the trans-sulfuration enzymes family. Homotetramer. It depends on pyridoxal 5'-phosphate as a cofactor.

The protein localises to the cytoplasm. It carries out the reaction O-succinyl-L-homoserine + L-cysteine = L,L-cystathionine + succinate + H(+). Its function is as follows. Catalyzes the formation of L-cystathionine from O-succinyl-L-homoserine (OSHS) and L-cysteine, via a gamma-replacement reaction. In the absence of thiol, catalyzes gamma-elimination to form 2-oxobutanoate, succinate and ammonia. The polypeptide is Cystathionine gamma-synthase (metB) (Mycobacterium bovis (strain ATCC BAA-935 / AF2122/97)).